A 213-amino-acid chain; its full sequence is Anti-sigma-E factor ChrR (213 aa).

Residues 2 to 85 (TIRHHVSDAL…QIQRPAPARR (84 aa)) are sufficient to bind sigma factor and inhibit its activity. Histidine 6, histidine 31, cysteine 35, cysteine 38, histidine 141, histidine 143, glutamate 147, and histidine 177 together coordinate Zn(2+). Positions 86–194 (ADPRAPAPLA…LDCICLAATD (109 aa)) are required for response to singlet oxygen.

Belongs to the zinc-associated anti-sigma factor (ZAS) superfamily. As to quaternary structure, forms a 1:1 complex with cognate ECF RNA polymerase sigma factor RpoE; this inhibits the interaction of RpoE with the RNA polymerase catalytic core. It depends on Zn(2+) as a cofactor.

Its function is as follows. Anti-sigma factor that inhibits the activity of the extracytoplasmic function (ECF) sigma-E factor (RpoE), thereby indirectly regulating the transcription of the cycA and rpoE genes. ECF sigma factors are held in an inactive form by a cognate anti-sigma factor. This chain is Anti-sigma-E factor ChrR (chrR), found in Cereibacter sphaeroides (strain ATCC 17023 / DSM 158 / JCM 6121 / CCUG 31486 / LMG 2827 / NBRC 12203 / NCIMB 8253 / ATH 2.4.1.) (Rhodobacter sphaeroides).